We begin with the raw amino-acid sequence, 710 residues long: Assimilatory nitrate reductase catalytic subunit (710 aa).

The 59-residue stretch at 19–77 folds into the 4Fe-4S Mo/W bis-MGD-type domain; the sequence is EKTYDTQCPFCSMQCKMQLVEQTIVTRKKYTAIGIDNPTTQGRLCIKGMNAHQHALNSS. 4 residues coordinate [4Fe-4S] cluster: Cys26, Cys29, Cys33, and Cys63.

Belongs to the prokaryotic molybdopterin-containing oxidoreductase family. [4Fe-4S] cluster is required as a cofactor. Requires Mo-bis(molybdopterin guanine dinucleotide) as cofactor.

The protein operates within nitrogen metabolism; nitrate reduction (denitrification); dinitrogen from nitrate: step 1/4. Functionally, nitrate reductase is a key enzyme involved in the first step of nitrate assimilation in plants, fungi and bacteria. This is Assimilatory nitrate reductase catalytic subunit (nasC) from Bacillus subtilis (strain 168).